The chain runs to 908 residues: NADH-quinone oxidoreductase subunit G (908 aa).

The 2Fe-2S ferredoxin-type domain occupies 2-83 (ATIHVDGKEY…GTFISIDDEE (82 aa)). The [2Fe-2S] cluster site is built by Cys-34, Cys-45, Cys-48, and Cys-67. Positions 83–122 (EAKQFRESVVEWLMTNHPHDCPVCEEGGNCHLQDMTVMTG) constitute a 4Fe-4S His(Cys)3-ligated-type domain. 12 residues coordinate [4Fe-4S] cluster: His-99, Cys-103, Cys-106, Cys-112, Cys-151, Cys-154, Cys-157, Cys-201, Cys-228, Cys-231, Cys-235, and Cys-263. Residues 221-277 (MQFAPSICQQCSIGCNISPGERYGELRRIENRYNGTVNHYFLCDRGRFGYGYVNLKD) enclose the 4Fe-4S Mo/W bis-MGD-type domain.

The protein belongs to the complex I 75 kDa subunit family. Composed of 13 different subunits. Subunits NuoCD, E, F, and G constitute the peripheral sector of the complex. [2Fe-2S] cluster serves as cofactor. Requires [4Fe-4S] cluster as cofactor.

It carries out the reaction a quinone + NADH + 5 H(+)(in) = a quinol + NAD(+) + 4 H(+)(out). Functionally, NDH-1 shuttles electrons from NADH, via FMN and iron-sulfur (Fe-S) centers, to quinones in the respiratory chain. The immediate electron acceptor for the enzyme in this species is believed to be ubiquinone. Couples the redox reaction to proton translocation (for every two electrons transferred, four hydrogen ions are translocated across the cytoplasmic membrane), and thus conserves the redox energy in a proton gradient. This chain is NADH-quinone oxidoreductase subunit G (nuoG), found in Salmonella typhi.